We begin with the raw amino-acid sequence, 287 residues long: Nucleoside kinase (287 aa).

Residues Asp13, Asn28, Gly38, and Asn42 each contribute to the substrate site. Gln102 provides a ligand contact to ATP. The substrate site is built by Ser104 and Gln150. Residues Asn173 and 196–201 (TNGERG) each bind ATP. A substrate-binding site is contributed by Asp227. Asp227 acts as the Proton acceptor in catalysis.

The protein belongs to the carbohydrate kinase PfkB family. Homodimer. Mg(2+) is required as a cofactor. Requires Co(2+) as cofactor.

The enzyme catalyses adenosine + ATP = AMP + ADP + H(+). It carries out the reaction cytidine + ATP = CMP + ADP + H(+). The catalysed reaction is guanosine + ATP = GMP + ADP + H(+). It catalyses the reaction inosine + ATP = IMP + ADP + H(+). Functionally, nucleoside kinase with broad substrate specificity. Catalyzes the phosphorylation of a variety of nucleosides to the corresponding nucleoside 5'-mono-phosphate in the presence of phosphate donors and divalent cations. Displays the most efficient activity with guanosine, followed by inosine, cytidine, and adenosine. Negligible enzymatic activity is detected with thymidine, uridine, and 2-deoxyadenosine. ATP is the most efficient phosphate donor, but can also use GTP and ITP. Shows no sugar kinase activity, since it is unable to phosphorylate ribose, fructose-1-phosphate, or fructose-6-phosphate. The protein is Nucleoside kinase of Thermoplasma acidophilum (strain ATCC 25905 / DSM 1728 / JCM 9062 / NBRC 15155 / AMRC-C165).